A 525-amino-acid polypeptide reads, in one-letter code: GMP synthase [glutamine-hydrolyzing] (525 aa).

In terms of domain architecture, Glutamine amidotransferase type-1 spans 9–207 (RILILDFGSQ…VRDICQCEAL (199 aa)). The active-site Nucleophile is the C86. Catalysis depends on residues H181 and E183. The region spanning 208–400 (WTPAKIIDDA…LGLPYDMLYR (193 aa)) is the GMPS ATP-PPase domain. ATP is bound at residue 235-241 (SGGVDSS).

Homodimer.

It carries out the reaction XMP + L-glutamine + ATP + H2O = GMP + L-glutamate + AMP + diphosphate + 2 H(+). Its pathway is purine metabolism; GMP biosynthesis; GMP from XMP (L-Gln route): step 1/1. Its function is as follows. Catalyzes the synthesis of GMP from XMP. The sequence is that of GMP synthase [glutamine-hydrolyzing] from Shigella dysenteriae serotype 1 (strain Sd197).